A 177-amino-acid chain; its full sequence is Large ribosomal subunit protein uL6 (177 aa).

Belongs to the universal ribosomal protein uL6 family. As to quaternary structure, part of the 50S ribosomal subunit.

In terms of biological role, this protein binds to the 23S rRNA, and is important in its secondary structure. It is located near the subunit interface in the base of the L7/L12 stalk, and near the tRNA binding site of the peptidyltransferase center. The chain is Large ribosomal subunit protein uL6 from Paracoccus denitrificans (strain Pd 1222).